Reading from the N-terminus, the 370-residue chain is Divinyl chlorophyll a/b light-harvesting protein PcbD (370 aa).

A run of 6 helical transmembrane segments spans residues 27–47 (FIAS…GSTL), 88–108 (VAAV…GALL), 140–160 (FILG…VEWA), 201–221 (VMGG…IHMV), 248–268 (AVLS…AFWA), and 315–335 (LVNV…WHAL).

Belongs to the PsbB/PsbC family. IsiA/Pcb subfamily. In terms of assembly, the antenna complex consists of divinyl chlorophylls (a and b) and divinyl chlorophyll a/b binding proteins and binds more divinyl chlorophyll b than does the antenna complex from high-light-adapted Prochlorococcus. Divinyl chlorophyll a is required as a cofactor. It depends on divinyl chlorophyll b as a cofactor.

It localises to the cellular thylakoid membrane. In terms of biological role, the antenna complex functions as a light receptor, it captures and delivers excitation energy to photosystems II and I. The Prochlorales pcb genes are not related to higher plant LHCs. The protein is Divinyl chlorophyll a/b light-harvesting protein PcbD (pcbD) of Prochlorococcus marinus (strain NATL2A).